A 217-amino-acid chain; its full sequence is Nuclear transcription factor Y subunit C-3 (217 aa).

A compositionally biased stretch (polar residues) spans 1-28; sequence MDQQGQSSAMNYGSNPYQTNAMTTTPTG. Disordered regions lie at residues 1-29 and 198-217; these read MDQQ…PTGS and PYMG…DPDN.

The protein belongs to the NFYC/HAP5 subunit family. In terms of assembly, heterotrimeric transcription factor composed of three components, NF-YA, NF-YB and NF-YC. NF-YB and NF-YC must interact and dimerize for NF-YA association and DNA binding. In terms of tissue distribution, ubiquitous.

The protein resides in the nucleus. Functionally, stimulates the transcription of various genes by recognizing and binding to a CCAAT motif in promoters. The sequence is that of Nuclear transcription factor Y subunit C-3 (NFYC3) from Arabidopsis thaliana (Mouse-ear cress).